We begin with the raw amino-acid sequence, 412 residues long: MHGKLLPLAGLYLVQGLPYGLQSSLLPILLRARGLSLTRVGLTKGLYAPWLLKLAWAPLVDRRGTPRVWLTLSTLSLGLVCGLLAVLPPPQAGQTGLPTTVMGLLLLLNLGAAVQDVALDTLAVQLLEPKELGPGNTVQVVAYKLGSALAGGGLLVLFPTLSWPLLFLLLAATYWLAAALAWAAPALGRLPWPQASEHTPHSSYLLQDLLAVPGTLWTAGFVLTYKLGEQGAGSLFPLLLLDHGASASDLGLWSGLGAVTCSIAGSSLGGALLARHWQPLKLLKTVLQLRLGSLACQTALLFHLNSPGASVDPGTVMRGAVLLSLCLQQFFGGVVTTATFTVMMHCSQLAPRALQATHYSFLATLELLGKLLLGTLAGVLADSLGPHLCFAVFLVLSALPVLDLRLAPSNLT.

12 helical membrane passes run 10-30, 40-60, 68-88, 99-119, 152-172, 173-193, 204-224, 252-272, 291-311, 320-340, 361-381, and 384-404; these read GLYLVQGLPYGLQSSLLPILL, VGLTKGLYAPWLLKLAWAPLV, VWLTLSTLSLGLVCGLLAVLP, TTVMGLLLLLNLGAAVQDVAL, GGLLVLFPTLSWPLLFLLLAA, TYWLAAALAWAAPALGRLPWP, YLLQDLLAVPGTLWTAGFVLT, LWSGLGAVTCSIAGSSLGGAL, LGSLACQTALLFHLNSPGASV, AVLLSLCLQQFFGGVVTTATF, FLATLELLGKLLLGTLAGVLA, and LGPHLCFAVFLVLSALPVLDL.

Belongs to the major facilitator superfamily. As to expression, in brain, expressed in the cortex, striatum, hippocampus, hypothalamus, thalamus and cerebellum (at protein level). Widely expressed with highest levels in kidney and liver.

It is found in the membrane. This chain is Major facilitator superfamily domain-containing protein 3 (Mfsd3), found in Mus musculus (Mouse).